The chain runs to 239 residues: 1-(5-phosphoribosyl)-5-[(5-phosphoribosylamino)methylideneamino] imidazole-4-carboxamide isomerase (239 aa).

Residue Asp-8 is the Proton acceptor of the active site. Asp-129 acts as the Proton donor in catalysis.

The protein belongs to the HisA/HisF family.

The protein resides in the cytoplasm. It carries out the reaction 1-(5-phospho-beta-D-ribosyl)-5-[(5-phospho-beta-D-ribosylamino)methylideneamino]imidazole-4-carboxamide = 5-[(5-phospho-1-deoxy-D-ribulos-1-ylimino)methylamino]-1-(5-phospho-beta-D-ribosyl)imidazole-4-carboxamide. It participates in amino-acid biosynthesis; L-histidine biosynthesis; L-histidine from 5-phospho-alpha-D-ribose 1-diphosphate: step 4/9. The chain is 1-(5-phosphoribosyl)-5-[(5-phosphoribosylamino)methylideneamino] imidazole-4-carboxamide isomerase from Legionella pneumophila subsp. pneumophila (strain Philadelphia 1 / ATCC 33152 / DSM 7513).